The sequence spans 317 residues: Heme A synthase (317 aa).

Over methionine 1–lysine 6 the chain is Cytoplasmic. Residues tryptophan 7 to threonine 27 traverse the membrane as a helical segment. At lysine 28–glutamine 54 the chain is on the extracellular side. An intrachain disulfide couples cysteine 35 to cysteine 42. Residues leucine 55–leucine 75 form a helical membrane-spanning segment. Glutamate 58 is an active-site residue. Residue histidine 61 participates in heme o binding. Topologically, residues cysteine 76–proline 91 are cytoplasmic. Residues leucine 92–valine 112 traverse the membrane as a helical segment. Topologically, residues tryptophan 113–histidine 123 are extracellular. Residue histidine 123 participates in heme o binding. The helical transmembrane segment at phenylalanine 124–valine 144 threads the bilayer. Over aspartate 145 to methionine 159 the chain is Cytoplasmic. The helical transmembrane segment at arginine 160 to valine 180 threads the bilayer. At arginine 181 to arginine 214 the chain is on the extracellular side. An intrachain disulfide couples cysteine 189 to cysteine 195. Histidine 213 is a binding site for heme b. The chain crosses the membrane as a helical span at residues leucine 215–tyrosine 235. At arginine 236 to tyrosine 243 the chain is on the cytoplasmic side. A helical membrane pass occupies residues glycine 244–phenylalanine 264. The Extracellular segment spans residues threonine 265–serine 272. Residues leucine 273–alanine 293 form a helical membrane-spanning segment. Histidine 275 is a binding site for heme b. Over leucine 294–lysine 317 the chain is Cytoplasmic.

Belongs to the COX15/CtaA family. Type 1 subfamily. As to quaternary structure, interacts with CtaB. It depends on heme b as a cofactor.

Its subcellular location is the cell membrane. The enzyme catalyses Fe(II)-heme o + 2 A + H2O = Fe(II)-heme a + 2 AH2. It participates in porphyrin-containing compound metabolism; heme A biosynthesis; heme A from heme O: step 1/1. Its function is as follows. Catalyzes the conversion of heme O to heme A by two successive hydroxylations of the methyl group at C8. The first hydroxylation forms heme I, the second hydroxylation results in an unstable dihydroxymethyl group, which spontaneously dehydrates, resulting in the formyl group of heme A. This chain is Heme A synthase, found in Geobacillus thermodenitrificans.